A 914-amino-acid chain; its full sequence is UPF0182 protein Syncc9605_1323 (914 aa).

9 helical membrane-spanning segments follow: residues 4–24 (LLLL…WLWF), 37–57 (WLLQ…ARAW), 81–101 (IALL…LDLL), 123–143 (RIGS…MTWL), 152–172 (IVAA…SLAL), 195–215 (FAGL…TLVF), 240–260 (MRLI…LVWL), 285–305 (LPLR…LLLP), and 312–332 (QFLA…TPLT).

The protein belongs to the UPF0182 family.

It is found in the cell membrane. This is UPF0182 protein Syncc9605_1323 from Synechococcus sp. (strain CC9605).